The chain runs to 240 residues: Small ribosomal subunit protein uS2 (240 aa).

Belongs to the universal ribosomal protein uS2 family. In terms of assembly, component of the small ribosomal subunit. Mature ribosomes consist of a small (40S) and a large (60S) subunit. The 40S subunit contains about 33 different proteins and 1 molecule of RNA (18S). The 60S subunit contains about 49 different proteins and 3 molecules of RNA (25S, 5.8S and 5S). Interacts with RPS21.

The protein localises to the cytoplasm. Functionally, required for the assembly and/or stability of the 40S ribosomal subunit. Required for the processing of the 20S rRNA-precursor to mature 18S rRNA in a late step of the maturation of 40S ribosomal subunits. In Enterocytozoon bieneusi (strain H348) (Microsporidian parasite), this protein is Small ribosomal subunit protein uS2.